We begin with the raw amino-acid sequence, 129 residues long: Phosphoribosyl-AMP cyclohydrolase (129 aa).

D85 is a binding site for Mg(2+). C86 serves as a coordination point for Zn(2+). Mg(2+) is bound by residues D87 and D89. Zn(2+) contacts are provided by C102 and C109.

Belongs to the PRA-CH family. As to quaternary structure, homodimer. Mg(2+) is required as a cofactor. The cofactor is Zn(2+).

It is found in the cytoplasm. It carries out the reaction 1-(5-phospho-beta-D-ribosyl)-5'-AMP + H2O = 1-(5-phospho-beta-D-ribosyl)-5-[(5-phospho-beta-D-ribosylamino)methylideneamino]imidazole-4-carboxamide. The protein operates within amino-acid biosynthesis; L-histidine biosynthesis; L-histidine from 5-phospho-alpha-D-ribose 1-diphosphate: step 3/9. Catalyzes the hydrolysis of the adenine ring of phosphoribosyl-AMP. In Methanococcus maripaludis (strain C7 / ATCC BAA-1331), this protein is Phosphoribosyl-AMP cyclohydrolase.